The primary structure comprises 161 residues: ATP synthase subunit b 1 (161 aa).

The helical transmembrane segment at 1–21 (MFATAEFWILACLVAFFAILG) threads the bilayer.

This sequence belongs to the ATPase B chain family. F-type ATPases have 2 components, F(1) - the catalytic core - and F(0) - the membrane proton channel. F(1) has five subunits: alpha(3), beta(3), gamma(1), delta(1), epsilon(1). F(0) has three main subunits: a(1), b(2) and c(10-14). The alpha and beta chains form an alternating ring which encloses part of the gamma chain. F(1) is attached to F(0) by a central stalk formed by the gamma and epsilon chains, while a peripheral stalk is formed by the delta and b chains.

Its subcellular location is the cell inner membrane. Functionally, f(1)F(0) ATP synthase produces ATP from ADP in the presence of a proton or sodium gradient. F-type ATPases consist of two structural domains, F(1) containing the extramembraneous catalytic core and F(0) containing the membrane proton channel, linked together by a central stalk and a peripheral stalk. During catalysis, ATP synthesis in the catalytic domain of F(1) is coupled via a rotary mechanism of the central stalk subunits to proton translocation. Component of the F(0) channel, it forms part of the peripheral stalk, linking F(1) to F(0). The chain is ATP synthase subunit b 1 from Parvibaculum lavamentivorans (strain DS-1 / DSM 13023 / NCIMB 13966).